The sequence spans 159 residues: Neurotrophin-3 (159 aa).

An N-terminal signal peptide occupies residues 1-3; the sequence is IQS. The propeptide occupies 4–115; it reads TSMDQGILTE…VQNRTSRRKR (112 aa). Positions 91–129 are disordered; it reads APLEPPPLYLTEEPLVQNRTSRRKREGKRHRGEYSVCDS. The N-linked (GlcNAc...) asparagine glycan is linked to asparagine 108. Residues 110 to 121 are compositionally biased toward basic residues; it reads TSRRKREGKRHR.

Belongs to the NGF-beta family.

The protein localises to the secreted. In terms of biological role, seems to promote the survival of visceral and proprioceptive sensory neurons. In Candoia carinata (Papuan tree boa), this protein is Neurotrophin-3 (NTF3).